The primary structure comprises 510 residues: Serine/threonine protein phosphatase 2A 57 kDa regulatory subunit B' kappa isoform (510 aa).

Residues 1–51 (MWKGFLSKLPRKTSASGRGADLDSGQCSNGAGNGNPIQRTSSCGSIPSGRS) form a disordered region. Residues 25-51 (GQCSNGAGNGNPIQRTSSCGSIPSGRS) are compositionally biased toward polar residues. T476 and T493 each carry phosphothreonine. S502 carries the phosphoserine modification. T508 bears the Phosphothreonine mark.

It belongs to the phosphatase 2A regulatory subunit B56 family. In terms of assembly, PP2A consists of a common heteromeric enzyme, composed of a catalytic subunit (subunits C), a constant regulatory subunit (subunit A), and a variety of regulatory subunits such as subunits B (the R2/B/PR55/B55, R3/B''/PR72/PR130/PR59 and R5/B'/B56 families). Interacts with SIT1. In terms of processing, phosphorylated at Thr-476, Thr-493, Ser-502 and Thr-508 by SIT1. As to expression, expressed in root stele and epidermal cells.

Its subcellular location is the cytoplasm. The protein localises to the cytosol. It localises to the cell membrane. B regulatory subunit of phosphatase 2A (PP2A) involved in salt stress response. Under salt stress conditions, required for the catalytic activity of PP2A and the dephosphorylation of SIT1, a negative regulator of salt tolerance. Dephosphorylation of SIT1 turns off salt-induced SIT1 activity directly, which has a positive effect on salt tolerance. In Oryza sativa subsp. japonica (Rice), this protein is Serine/threonine protein phosphatase 2A 57 kDa regulatory subunit B' kappa isoform.